A 439-amino-acid polypeptide reads, in one-letter code: Ribosomal protein uS12 methylthiotransferase RimO (439 aa).

The region spanning 2–114 (SKLYLMSLGC…IDEMILKKTN (113 aa)) is the MTTase N-terminal domain. Residues cysteine 11, cysteine 45, cysteine 77, cysteine 146, cysteine 150, and cysteine 153 each contribute to the [4Fe-4S] cluster site. A Radical SAM core domain is found at 132-363 (TGSNSHAFIK…VDEVIEKSFE (232 aa)).

The protein belongs to the methylthiotransferase family. RimO subfamily. [4Fe-4S] cluster is required as a cofactor.

The protein localises to the cytoplasm. It catalyses the reaction L-aspartate(89)-[ribosomal protein uS12]-hydrogen + (sulfur carrier)-SH + AH2 + 2 S-adenosyl-L-methionine = 3-methylsulfanyl-L-aspartate(89)-[ribosomal protein uS12]-hydrogen + (sulfur carrier)-H + 5'-deoxyadenosine + L-methionine + A + S-adenosyl-L-homocysteine + 2 H(+). Functionally, catalyzes the methylthiolation of an aspartic acid residue of ribosomal protein uS12. The sequence is that of Ribosomal protein uS12 methylthiotransferase RimO from Campylobacter jejuni subsp. jejuni serotype O:2 (strain ATCC 700819 / NCTC 11168).